The primary structure comprises 571 residues: Glutamate--tRNA ligase (571 aa).

The 'HIGH' region signature appears at 110-120; sequence PNPNGPATLGS.

It belongs to the class-I aminoacyl-tRNA synthetase family. Glutamate--tRNA ligase type 2 subfamily.

The protein resides in the cytoplasm. It carries out the reaction tRNA(Glu) + L-glutamate + ATP = L-glutamyl-tRNA(Glu) + AMP + diphosphate. In terms of biological role, catalyzes the attachment of glutamate to tRNA(Glu) in a two-step reaction: glutamate is first activated by ATP to form Glu-AMP and then transferred to the acceptor end of tRNA(Glu). This chain is Glutamate--tRNA ligase, found in Methanosarcina mazei (strain ATCC BAA-159 / DSM 3647 / Goe1 / Go1 / JCM 11833 / OCM 88) (Methanosarcina frisia).